We begin with the raw amino-acid sequence, 147 residues long: UPF0178 protein Tgr7_2584 (147 aa).

The protein belongs to the UPF0178 family.

The sequence is that of UPF0178 protein Tgr7_2584 from Thioalkalivibrio sulfidiphilus (strain HL-EbGR7).